A 205-amino-acid polypeptide reads, in one-letter code: Holliday junction branch migration complex subunit RuvA (205 aa).

Residues M1–L64 are domain I. The tract at residues S65–I143 is domain II. The tract at residues G144–V153 is flexible linker. Residues V153–R205 form a domain III region.

This sequence belongs to the RuvA family. Homotetramer. Forms an RuvA(8)-RuvB(12)-Holliday junction (HJ) complex. HJ DNA is sandwiched between 2 RuvA tetramers; dsDNA enters through RuvA and exits via RuvB. An RuvB hexamer assembles on each DNA strand where it exits the tetramer. Each RuvB hexamer is contacted by two RuvA subunits (via domain III) on 2 adjacent RuvB subunits; this complex drives branch migration. In the full resolvosome a probable DNA-RuvA(4)-RuvB(12)-RuvC(2) complex forms which resolves the HJ.

The protein localises to the cytoplasm. Functionally, the RuvA-RuvB-RuvC complex processes Holliday junction (HJ) DNA during genetic recombination and DNA repair, while the RuvA-RuvB complex plays an important role in the rescue of blocked DNA replication forks via replication fork reversal (RFR). RuvA specifically binds to HJ cruciform DNA, conferring on it an open structure. The RuvB hexamer acts as an ATP-dependent pump, pulling dsDNA into and through the RuvAB complex. HJ branch migration allows RuvC to scan DNA until it finds its consensus sequence, where it cleaves and resolves the cruciform DNA. This is Holliday junction branch migration complex subunit RuvA from Rhizobium meliloti (strain 1021) (Ensifer meliloti).